Here is a 177-residue protein sequence, read N- to C-terminus: Protein GrpE (177 aa).

The protein belongs to the GrpE family. Homodimer.

It localises to the cytoplasm. Participates actively in the response to hyperosmotic and heat shock by preventing the aggregation of stress-denatured proteins, in association with DnaK and GrpE. It is the nucleotide exchange factor for DnaK and may function as a thermosensor. Unfolded proteins bind initially to DnaJ; upon interaction with the DnaJ-bound protein, DnaK hydrolyzes its bound ATP, resulting in the formation of a stable complex. GrpE releases ADP from DnaK; ATP binding to DnaK triggers the release of the substrate protein, thus completing the reaction cycle. Several rounds of ATP-dependent interactions between DnaJ, DnaK and GrpE are required for fully efficient folding. This is Protein GrpE from Thermus thermophilus (strain ATCC BAA-163 / DSM 7039 / HB27).